A 186-amino-acid polypeptide reads, in one-letter code: Probable peptidyl-tRNA hydrolase 2 (186 aa).

The protein belongs to the PTH2 family.

It carries out the reaction an N-acyl-L-alpha-aminoacyl-tRNA + H2O = an N-acyl-L-amino acid + a tRNA + H(+). The natural substrate for this enzyme may be peptidyl-tRNAs which drop off the ribosome during protein synthesis. This Drosophila melanogaster (Fruit fly) protein is Probable peptidyl-tRNA hydrolase 2.